The chain runs to 324 residues: Protein SRC2 homolog (324 aa).

Positions 1–111 (MECRSLDLTI…LDQNKGDEEK (111 aa)) constitute a C2 domain. The Cytoplasmic segment spans residues 1–279 (MECRSLDLTI…KPQKPKKHGK (279 aa)). The tract at residues 141–281 (GSSSGPHAPV…QKPKKHGKAG (141 aa)) is disordered. Low complexity-rich tracts occupy residues 166–175 (YPPGHGAPSA) and 246–269 (PYGY…QAHG). The segment covering 270 to 279 (KPQKPKKHGK) has biased composition (basic residues). The chain crosses the membrane as a helical; Signal-anchor span at residues 280–300 (AGAGMGLGLGLGAGLLGGLLV). Topologically, residues 301–324 (GEAVSDIADMGDMGDMGDMGGFDF) are lumenal.

Interacts with RBOHF (via N-terminus).

Its subcellular location is the endoplasmic reticulum membrane. The protein localises to the protein storage vacuole membrane. It is found in the cell membrane. May act as an activator of the calcium-dependent activation of RBOHF that mediates reactive oxygen species (ROS) production and may play a role in cold responses. This is Protein SRC2 homolog from Arabidopsis thaliana (Mouse-ear cress).